The chain runs to 183 residues: Neuroblastoma suppressor of tumorigenicity 1 (183 aa).

Residues 1 to 19 form the signal peptide; the sequence is MVMCVRAVLVCVLLELSRA. Cystine bridges form between Cys38-Cys88, Cys52-Cys102, Cys62-Cys121, Cys66-Cys123, and Cys85-Cys126. The CTCK domain maps to 38–127; it reads CEAKNITQIV…ILHCSCQSCS (90 aa). The segment at 145–170 is disordered; it reads AQDLPSLPDATHTHPQHAHMQADQRD.

It belongs to the DAN family.

Its subcellular location is the secreted. Functionally, may act as a tumor suppressor. This chain is Neuroblastoma suppressor of tumorigenicity 1 (nbl1), found in Danio rerio (Zebrafish).